We begin with the raw amino-acid sequence, 285 residues long: ATP synthase gamma chain (285 aa).

This sequence belongs to the ATPase gamma chain family. As to quaternary structure, F-type ATPases have 2 components, CF(1) - the catalytic core - and CF(0) - the membrane proton channel. CF(1) has five subunits: alpha(3), beta(3), gamma(1), delta(1), epsilon(1). CF(0) has three main subunits: a, b and c.

It is found in the cell membrane. In terms of biological role, produces ATP from ADP in the presence of a proton gradient across the membrane. The gamma chain is believed to be important in regulating ATPase activity and the flow of protons through the CF(0) complex. The sequence is that of ATP synthase gamma chain from Geobacillus kaustophilus (strain HTA426).